The sequence spans 104 residues: Guanidinium exporter (104 aa).

Topologically, residues 1–3 (MSW) are cytoplasmic. A helical membrane pass occupies residues 4-26 (IILFVAGLLEIVWAVGLKYTHGF). Residues 27–32 (TRLTPS) are Periplasmic-facing. A helical transmembrane segment spans residues 33 to 50 (IITISAMIVSMGMLSYAM). Topologically, residues 51 to 54 (KGLP) are cytoplasmic. The chain crosses the membrane as a helical span at residues 55 to 77 (AGTAYAIWTGIGAVGTAIFGIIV). The Periplasmic segment spans residues 78 to 83 (FGESAN). Residues 84–103 (IYRLLSLAMIVFGIIGLKLA) traverse the membrane as a helical segment. A topological domain (cytoplasmic) is located at residue serine 104.

Belongs to the drug/metabolite transporter (DMT) superfamily. Small multidrug resistance (SMR) (TC 2.A.7.1) family. Gdx/SugE subfamily.

It localises to the cell inner membrane. Guanidinium ion exporter. Couples guanidinium export to the proton motive force, exchanging one guanidinium ion for two protons. The protein is Guanidinium exporter of Proteus vulgaris.